The sequence spans 419 residues: Acetyl transferase GW6a (419 aa).

In terms of domain architecture, N-acetyltransferase spans 12–210; it reads VRVREFDVEK…GHPVHAHRLP (199 aa). A disordered region spans residues 44-68; that stretch reads VHDHADDGDGAAAKEKKKTKTKTKK. The span at 58–68 shows a compositional bias: basic residues; it reads EKKKTKTKTKK.

The protein belongs to the acetyltransferase family. In terms of assembly, interacts (via C-terminus) with HDR3 (via N-terminus). Ubiquitinated at Lys-63 by HDR3. Polyubiquitination of GW6A delays its degradation by the 26S proteasome and enhances GW6A histone acetyltransferase activity. Expressed in roots, leaf blades, leaf sheaths, shoot apical meristem and young panicles.

The protein resides in the nucleus. Its function is as follows. Possesses intrinsic histone acetyltransferase activity and acts as a positive regulator of grain weight, hull size, yield, and plant biomass. Regulates postitively grain weight and yield by enlarging spikelet hulls via increasing cell number and accelerating grain filling. In vitro, catalyzes the acetylation of histone H4 at Lys-6 (H4K5ac), Lys-13 (H4K12ac) and Lys-17 (H4K16ac). Involved in the regulation of plastochron (the time interval between leaf initiation event). This Oryza sativa subsp. japonica (Rice) protein is Acetyl transferase GW6a.